Here is a 169-residue protein sequence, read N- to C-terminus: Oleosin Ara h 10.0101 (169 aa).

The next 2 helical transmembrane spans lie at 39-59 and 73-93; these read VIAV…AGLA and LFIL…LSVA. The span at 146 to 156 shows a compositional bias: basic and acidic residues; sequence KDVGQKTKEVG. The segment at 146–169 is disordered; sequence KDVGQKTKEVGQEIQTKAQDSKRT.

It belongs to the oleosin family. In terms of tissue distribution, expressed in seeds (at protein level).

The protein localises to the lipid droplet. The protein resides in the membrane. Its function is as follows. May have a structural role to stabilize the lipid body during desiccation of the seed by preventing coalescence of the oil. Probably interacts with both lipid and phospholipid moieties of lipid bodies. May also provide recognition signals for specific lipase anchorage in lipolysis during seedling growth. This chain is Oleosin Ara h 10.0101, found in Arachis hypogaea (Peanut).